The chain runs to 409 residues: NADH-quinone oxidoreductase subunit D (409 aa).

The protein belongs to the complex I 49 kDa subunit family. In terms of assembly, NDH-1 is composed of 14 different subunits. Subunits NuoB, C, D, E, F, and G constitute the peripheral sector of the complex.

It localises to the cell inner membrane. It carries out the reaction a quinone + NADH + 5 H(+)(in) = a quinol + NAD(+) + 4 H(+)(out). Its function is as follows. NDH-1 shuttles electrons from NADH, via FMN and iron-sulfur (Fe-S) centers, to quinones in the respiratory chain. The immediate electron acceptor for the enzyme in this species is believed to be ubiquinone. Couples the redox reaction to proton translocation (for every two electrons transferred, four hydrogen ions are translocated across the cytoplasmic membrane), and thus conserves the redox energy in a proton gradient. The polypeptide is NADH-quinone oxidoreductase subunit D (Helicobacter acinonychis (strain Sheeba)).